The primary structure comprises 427 residues: Glutamyl-tRNA reductase (427 aa).

Substrate is bound by residues 48-51 (TCNR), Ser99, 104-106 (EDQ), and Gln110. Cys49 (nucleophile) is an active-site residue. 179-184 (GAGEMG) contributes to the NADP(+) binding site.

The protein belongs to the glutamyl-tRNA reductase family. As to quaternary structure, homodimer.

It carries out the reaction (S)-4-amino-5-oxopentanoate + tRNA(Glu) + NADP(+) = L-glutamyl-tRNA(Glu) + NADPH + H(+). Its pathway is porphyrin-containing compound metabolism; protoporphyrin-IX biosynthesis; 5-aminolevulinate from L-glutamyl-tRNA(Glu): step 1/2. Catalyzes the NADPH-dependent reduction of glutamyl-tRNA(Glu) to glutamate 1-semialdehyde (GSA). The chain is Glutamyl-tRNA reductase from Methanocella arvoryzae (strain DSM 22066 / NBRC 105507 / MRE50).